A 191-amino-acid polypeptide reads, in one-letter code: Fe/S biogenesis protein NfuA (191 aa).

[4Fe-4S] cluster-binding residues include Cys-149 and Cys-152.

This sequence belongs to the NfuA family. In terms of assembly, homodimer. [4Fe-4S] cluster serves as cofactor.

In terms of biological role, involved in iron-sulfur cluster biogenesis. Binds a 4Fe-4S cluster, can transfer this cluster to apoproteins, and thereby intervenes in the maturation of Fe/S proteins. Could also act as a scaffold/chaperone for damaged Fe/S proteins. In Salmonella typhi, this protein is Fe/S biogenesis protein NfuA.